The following is a 1926-amino-acid chain: Rho GTPase-activating protein 21-A (1926 aa).

Residues 1-41 (MATRRAIVPEQQQEPSSPASEISKNKDGQEQSEMVSPMEEE) are disordered. Residues 10–22 (EQQQEPSSPASEI) are compositionally biased toward polar residues. In terms of domain architecture, PDZ spans 77–162 (HTSIKDEENG…TLELSVMPKD (86 aa)). Disordered stretches follow at residues 211-236 (VEVPPSGTSLAKQQSSRPVRTATTQP), 353-378 (PTAQAEGSPSPTNHYSSPGPHQQIDW), 416-487 (TDYN…RSES), 571-592 (QPTRQNSYRSPHPRPAVSDRSG), 640-704 (FQRK…DSDA), and 868-905 (GKLGLKQGSSLKGVQARENVPSSEDSESRKDSSSDVFS). 3 stretches are compositionally biased toward polar residues: residues 216–236 (SGTSLAKQQSSRPVRTATTQP), 353–372 (PTAQAEGSPSPTNHYSSPGP), and 416–429 (TDYNQMLPNHFSGQ). Over residues 441–451 (QQSVQMRQRSV) the composition is skewed to low complexity. Positions 452-466 (SQERLEDPVLMKEWP) are enriched in basic and acidic residues. A compositionally biased stretch (polar residues) spans 468–479 (SASQDTLSSAVA). The span at 640-669 (FQRKTQTESASGFQLDSVKTSMSASSSPPA) shows a compositional bias: polar residues. Positions 906-1019 (DSNKEGFLYF…WIKAIQENGN (114 aa)) constitute a PH domain. Residues 1044–1064 (MSSASNKSEQSPKAPRQTLSI) show a composition bias toward polar residues. Residues 1044–1107 (MSSASNKSEQ…SPPKDKGSWR (64 aa)) are disordered. Over residues 1083–1105 (PKQESERRLFSKDDISPPKDKGS) the composition is skewed to basic and acidic residues. One can recognise a Rho-GAP domain in the interval 1126 to 1318 (VRLDDCPPAH…TLIQKHDWFF (193 aa)). 6 disordered regions span residues 1330 to 1381 (VHEE…SGKD), 1396 to 1416 (ASRKRKKPKDKPQPSSSEDEL), 1512 to 1540 (QMEESMSDSGTMLSNSSQASAQRSKPKVV), 1573 to 1598 (LDPNPISPEVQSVAESKGEEADDERS), 1626 to 1658 (RQHRSKEEDPPRNVQANAEGSPSCTEGSITPRL), and 1827 to 1915 (STSE…LSGT). Positions 1512–1534 (QMEESMSDSGTMLSNSSQASAQR) are enriched in polar residues. Composition is skewed to polar residues over residues 1639–1653 (VQANAEGSPSCTEGS) and 1866–1902 (TADIPTGSESPSLGTAPQSDDQMNGDSFQSKNKNNFS).

The protein localises to the golgi apparatus membrane. Its subcellular location is the cell junction. The protein resides in the cytoplasmic vesicle membrane. It is found in the cytoplasm. It localises to the cytoskeleton. Its function is as follows. GTPase-activating protein (GAP) for rhoa and cdc42. In Xenopus laevis (African clawed frog), this protein is Rho GTPase-activating protein 21-A (arhgap21-a).